Consider the following 226-residue polypeptide: Phosphoribosylformylglycinamidine synthase subunit PurQ (226 aa).

A Glutamine amidotransferase type-1 domain is found at 2-225; sequence RFGIVVFPGS…MHYLEGGKNN (224 aa). The Nucleophile role is filled by C86. Active-site residues include H194 and E196.

As to quaternary structure, part of the FGAM synthase complex composed of 1 PurL, 1 PurQ and 2 PurS subunits.

It is found in the cytoplasm. The catalysed reaction is N(2)-formyl-N(1)-(5-phospho-beta-D-ribosyl)glycinamide + L-glutamine + ATP + H2O = 2-formamido-N(1)-(5-O-phospho-beta-D-ribosyl)acetamidine + L-glutamate + ADP + phosphate + H(+). The enzyme catalyses L-glutamine + H2O = L-glutamate + NH4(+). It functions in the pathway purine metabolism; IMP biosynthesis via de novo pathway; 5-amino-1-(5-phospho-D-ribosyl)imidazole from N(2)-formyl-N(1)-(5-phospho-D-ribosyl)glycinamide: step 1/2. Part of the phosphoribosylformylglycinamidine synthase complex involved in the purines biosynthetic pathway. Catalyzes the ATP-dependent conversion of formylglycinamide ribonucleotide (FGAR) and glutamine to yield formylglycinamidine ribonucleotide (FGAM) and glutamate. The FGAM synthase complex is composed of three subunits. PurQ produces an ammonia molecule by converting glutamine to glutamate. PurL transfers the ammonia molecule to FGAR to form FGAM in an ATP-dependent manner. PurS interacts with PurQ and PurL and is thought to assist in the transfer of the ammonia molecule from PurQ to PurL. This chain is Phosphoribosylformylglycinamidine synthase subunit PurQ, found in Alkaliphilus metalliredigens (strain QYMF).